Reading from the N-terminus, the 312-residue chain is 1-(5-phosphoribosyl)-5-[(5-phosphoribosylamino)methylideneamino] imidazole-4-carboxamide isomerase HISN3, chloroplastic (312 aa).

The transit peptide at Met-1–Val-67 directs the protein to the chloroplast. Position 57 (Asp-57) interacts with 1-(5-phospho-beta-D-ribosyl)-5-[(5-phospho-beta-D-ribosylamino)methylideneamino]imidazole-4-carboxamide. Gln-65 lines the 5-[(5-phospho-1-deoxy-D-ribulos-1-ylimino)methylamino]-1-(5-phospho-beta-D-ribosyl)imidazole-4-carboxamide pocket. Positions 65 and 66 each coordinate Na(+). Residue Gly-68 coordinates 1-(5-phospho-beta-D-ribosyl)-5-[(5-phospho-beta-D-ribosylamino)methylideneamino]imidazole-4-carboxamide. His-108, Gly-138, Thr-158, and Ser-159 together coordinate 5-[(5-phospho-1-deoxy-D-ribulos-1-ylimino)methylamino]-1-(5-phospho-beta-D-ribosyl)imidazole-4-carboxamide. 1-(5-phospho-beta-D-ribosyl)-5-[(5-phospho-beta-D-ribosylamino)methylideneamino]imidazole-4-carboxamide-binding residues include Gly-138, Thr-158, and Ser-159. Ser-159 and Phe-162 together coordinate Na(+). Residues Asp-187, Arg-203, Trp-204, and His-230 each coordinate 1-(5-phospho-beta-D-ribosyl)-5-[(5-phospho-beta-D-ribosylamino)methylideneamino]imidazole-4-carboxamide. Asp-187 serves as a coordination point for 5-[(5-phospho-1-deoxy-D-ribulos-1-ylimino)methylamino]-1-(5-phospho-beta-D-ribosyl)imidazole-4-carboxamide. A 5-[(5-phospho-1-deoxy-D-ribulos-1-ylimino)methylamino]-1-(5-phospho-beta-D-ribosyl)imidazole-4-carboxamide-binding site is contributed by Trp-204. Residue Glu-235 coordinates Na(+). Residues Gly-236, Gly-262, Gly-285, and Ser-286 each contribute to the 1-(5-phospho-beta-D-ribosyl)-5-[(5-phospho-beta-D-ribosylamino)methylideneamino]imidazole-4-carboxamide site. The 5-[(5-phospho-1-deoxy-D-ribulos-1-ylimino)methylamino]-1-(5-phospho-beta-D-ribosyl)imidazole-4-carboxamide site is built by Gly-236, Gly-262, Gly-285, and Ser-286.

The protein belongs to the HisA/HisF family. Requires Na(+) as cofactor.

It is found in the plastid. It localises to the chloroplast. It catalyses the reaction 1-(5-phospho-beta-D-ribosyl)-5-[(5-phospho-beta-D-ribosylamino)methylideneamino]imidazole-4-carboxamide = 5-[(5-phospho-1-deoxy-D-ribulos-1-ylimino)methylamino]-1-(5-phospho-beta-D-ribosyl)imidazole-4-carboxamide. The protein operates within amino-acid biosynthesis; L-histidine biosynthesis; L-histidine from 5-phospho-alpha-D-ribose 1-diphosphate: step 4/9. In terms of biological role, component of the histidine biosynthesis pathway that catalyzes the isomerization of 5'-ProFAR (pro-phosphoribosyl formimino-5-aminoimidazole-4-carboxamide ribonucleotide, referred as 1-(5-phospho-beta-D-ribosyl)-5-[(5-phospho-beta-D-ribosylamino)methylideneamino]imidazole-4-carboxamide) to PrFAR (phosphoribulosyl formimino-5-aminoimidazole-4-carboxamide ribonucleotide, referred as 5-[(5-phospho-1-deoxy-D-ribulos-1-ylimino)methylamino]-1-(5-phospho-beta-D-ribosyl)imidazole-4-carboxamide). The protein is 1-(5-phosphoribosyl)-5-[(5-phosphoribosylamino)methylideneamino] imidazole-4-carboxamide isomerase HISN3, chloroplastic of Medicago truncatula (Barrel medic).